The chain runs to 393 residues: NAD(P)H-quinone oxidoreductase subunit H, chloroplastic (393 aa).

It belongs to the complex I 49 kDa subunit family. In terms of assembly, NDH is composed of at least 16 different subunits, 5 of which are encoded in the nucleus.

The protein localises to the plastid. The protein resides in the chloroplast thylakoid membrane. It carries out the reaction a plastoquinone + NADH + (n+1) H(+)(in) = a plastoquinol + NAD(+) + n H(+)(out). The enzyme catalyses a plastoquinone + NADPH + (n+1) H(+)(in) = a plastoquinol + NADP(+) + n H(+)(out). Its function is as follows. NDH shuttles electrons from NAD(P)H:plastoquinone, via FMN and iron-sulfur (Fe-S) centers, to quinones in the photosynthetic chain and possibly in a chloroplast respiratory chain. The immediate electron acceptor for the enzyme in this species is believed to be plastoquinone. Couples the redox reaction to proton translocation, and thus conserves the redox energy in a proton gradient. In Anthoceros angustus (Hornwort), this protein is NAD(P)H-quinone oxidoreductase subunit H, chloroplastic.